A 391-amino-acid polypeptide reads, in one-letter code: Succinate--CoA ligase [ADP-forming] subunit beta (391 aa).

The ATP-grasp domain occupies 9 to 237 (RDLFEKHGVP…RATTDPLELR (229 aa)). ATP-binding positions include K46, 53–55 (GRG), A95, and E100. Mg(2+) contacts are provided by N192 and D206. Substrate contacts are provided by residues N257 and 320–322 (GIT).

It belongs to the succinate/malate CoA ligase beta subunit family. As to quaternary structure, heterotetramer of two alpha and two beta subunits. Mg(2+) is required as a cofactor.

It carries out the reaction succinate + ATP + CoA = succinyl-CoA + ADP + phosphate. The catalysed reaction is GTP + succinate + CoA = succinyl-CoA + GDP + phosphate. Its pathway is carbohydrate metabolism; tricarboxylic acid cycle; succinate from succinyl-CoA (ligase route): step 1/1. Functionally, succinyl-CoA synthetase functions in the citric acid cycle (TCA), coupling the hydrolysis of succinyl-CoA to the synthesis of either ATP or GTP and thus represents the only step of substrate-level phosphorylation in the TCA. The beta subunit provides nucleotide specificity of the enzyme and binds the substrate succinate, while the binding sites for coenzyme A and phosphate are found in the alpha subunit. This is Succinate--CoA ligase [ADP-forming] subunit beta from Cutibacterium acnes (strain DSM 16379 / KPA171202) (Propionibacterium acnes).